We begin with the raw amino-acid sequence, 64 residues long: Micrurotoxin 2 (64 aa).

5 cysteine pairs are disulfide-bonded: Cys-3–Cys-24, Cys-6–Cys-11, Cys-17–Cys-41, Cys-45–Cys-57, and Cys-58–Cys-63.

It belongs to the three-finger toxin family. Ancestral subfamily. In terms of tissue distribution, expressed by the venom gland.

The protein resides in the secreted. Functionally, allosteric modulator of the GABA(A) receptor (GABR), possibly increasing receptor affinity for the agonist, thus enhancing receptor opening and macroscopic desensitization. In vivo, intracerebroventricular injection into mice results in periods of reduced basal activity, followed by bursts of intense seizures and death. This is Micrurotoxin 2 from Micrurus mipartitus (Red-tailed coral snake).